The primary structure comprises 170 residues: RNA pyrophosphohydrolase (170 aa).

In terms of domain architecture, Nudix hydrolase spans 6-149 (GFRPNVGIIL…KRDVYRRALK (144 aa)). The short motif at 39-60 (GGIKHNESPENALYRELEEEVG) is the Nudix box element.

Belongs to the Nudix hydrolase family. RppH subfamily. Requires a divalent metal cation as cofactor.

Functionally, accelerates the degradation of transcripts by removing pyrophosphate from the 5'-end of triphosphorylated RNA, leading to a more labile monophosphorylated state that can stimulate subsequent ribonuclease cleavage. The chain is RNA pyrophosphohydrolase from Saccharophagus degradans (strain 2-40 / ATCC 43961 / DSM 17024).